We begin with the raw amino-acid sequence, 294 residues long: Hydroxyethylthiazole kinase (294 aa).

A substrate-binding site is contributed by methionine 57. ATP is bound by residues arginine 132 and serine 196. Position 223 (glycine 223) interacts with substrate.

This sequence belongs to the Thz kinase family. Requires Mg(2+) as cofactor.

The catalysed reaction is 5-(2-hydroxyethyl)-4-methylthiazole + ATP = 4-methyl-5-(2-phosphooxyethyl)-thiazole + ADP + H(+). The protein operates within cofactor biosynthesis; thiamine diphosphate biosynthesis; 4-methyl-5-(2-phosphoethyl)-thiazole from 5-(2-hydroxyethyl)-4-methylthiazole: step 1/1. Catalyzes the phosphorylation of the hydroxyl group of 4-methyl-5-beta-hydroxyethylthiazole (THZ). The protein is Hydroxyethylthiazole kinase of Bifidobacterium adolescentis (strain ATCC 15703 / DSM 20083 / NCTC 11814 / E194a).